We begin with the raw amino-acid sequence, 312 residues long: Zinc transporter ZitB (312 aa).

The next 5 helical transmembrane spans lie at 21–41 (LLFA…GGIL), 48–68 (LADA…LLVV), 90–110 (AAFV…WEAI), 123–143 (LMMV…WILH), and 164–184 (LLGS…GWTP).

Belongs to the cation diffusion facilitator (CDF) transporter (TC 2.A.4) family. SLC30A subfamily.

Its subcellular location is the cell inner membrane. Functionally, involved in zinc efflux across the cytoplasmic membrane, thus reducing zinc accumulation in the cytoplasm and rendering bacteria more resistant to zinc. It may contribute to zinc homeostasis at low concentrations of zinc. The protein is Zinc transporter ZitB of Salmonella typhi.